Reading from the N-terminus, the 487-residue chain is Cysteine--tRNA ligase (487 aa).

Cysteine 27 serves as a coordination point for Zn(2+). Residues 29-39 (VTVYDLCHIGH) carry the 'HIGH' region motif. Zn(2+) is bound by residues cysteine 211, histidine 236, and glutamate 240. The short motif at 268-272 (KMSKS) is the 'KMSKS' region element. Lysine 271 lines the ATP pocket.

It belongs to the class-I aminoacyl-tRNA synthetase family. As to quaternary structure, monomer. Requires Zn(2+) as cofactor.

It localises to the cytoplasm. The enzyme catalyses tRNA(Cys) + L-cysteine + ATP = L-cysteinyl-tRNA(Cys) + AMP + diphosphate. The sequence is that of Cysteine--tRNA ligase from Thermodesulfovibrio yellowstonii (strain ATCC 51303 / DSM 11347 / YP87).